We begin with the raw amino-acid sequence, 98 residues long: Exopolysaccharide production repressor protein (98 aa).

The next 2 membrane-spanning stretches (helical) occupy residues 6–26 (VFLS…YLNG) and 35–55 (TLIC…FLVW). The interval 73-98 (AEAANDEKQPGKVSLRRLNRPHHLNS) is disordered. Positions 86–98 (SLRRLNRPHHLNS) are enriched in basic residues.

It is found in the cell membrane. It participates in glycan metabolism; exopolysaccharide biosynthesis. Functionally, inhibition of exopolysaccharide synthesis (EPS) and nodulation ability (NOD). This is Exopolysaccharide production repressor protein (exoX) from Rhizobium meliloti (strain 1021) (Ensifer meliloti).